The sequence spans 207 residues: Holliday junction branch migration complex subunit RuvA (207 aa).

The segment at 1-68 (MIGYLQGSLA…EDQWLLFGFL (68 aa)) is domain I. The domain II stretch occupies residues 69–147 (QMAERDLFRQ…EWREEAGLLP (79 aa)). The interval 148 to 158 (SATAAPIAAVQ) is flexible linker. A domain III region spans residues 158–207 (QEDVEMTLLALGYNNREILQALTAIAQENLVQSGQPAEDWIREAIAWLSR).

This sequence belongs to the RuvA family. As to quaternary structure, homotetramer. Forms an RuvA(8)-RuvB(12)-Holliday junction (HJ) complex. HJ DNA is sandwiched between 2 RuvA tetramers; dsDNA enters through RuvA and exits via RuvB. An RuvB hexamer assembles on each DNA strand where it exits the tetramer. Each RuvB hexamer is contacted by two RuvA subunits (via domain III) on 2 adjacent RuvB subunits; this complex drives branch migration. In the full resolvosome a probable DNA-RuvA(4)-RuvB(12)-RuvC(2) complex forms which resolves the HJ.

The protein localises to the cytoplasm. The RuvA-RuvB-RuvC complex processes Holliday junction (HJ) DNA during genetic recombination and DNA repair, while the RuvA-RuvB complex plays an important role in the rescue of blocked DNA replication forks via replication fork reversal (RFR). RuvA specifically binds to HJ cruciform DNA, conferring on it an open structure. The RuvB hexamer acts as an ATP-dependent pump, pulling dsDNA into and through the RuvAB complex. HJ branch migration allows RuvC to scan DNA until it finds its consensus sequence, where it cleaves and resolves the cruciform DNA. The protein is Holliday junction branch migration complex subunit RuvA of Synechococcus elongatus (strain ATCC 33912 / PCC 7942 / FACHB-805) (Anacystis nidulans R2).